Reading from the N-terminus, the 34-residue chain is Stromal 70 kDa heat shock-related protein, chloroplastic (34 aa).

This sequence belongs to the heat shock protein 70 family.

The protein localises to the plastid. The protein resides in the chloroplast stroma. Interacts with newly imported chloroplast proteins to assist in their maturation. This is Stromal 70 kDa heat shock-related protein, chloroplastic from Cucurbita maxima (Pumpkin).